We begin with the raw amino-acid sequence, 175 residues long: Ribosome maturation factor RimM (175 aa).

Residues 103-175 (EGEYYWSDLI…LLTVDWDPDF (73 aa)) form the PRC barrel domain.

The protein belongs to the RimM family. In terms of assembly, binds ribosomal protein uS19.

The protein resides in the cytoplasm. In terms of biological role, an accessory protein needed during the final step in the assembly of 30S ribosomal subunit, possibly for assembly of the head region. Essential for efficient processing of 16S rRNA. May be needed both before and after RbfA during the maturation of 16S rRNA. It has affinity for free ribosomal 30S subunits but not for 70S ribosomes. The chain is Ribosome maturation factor RimM from Nitrosococcus oceani (strain ATCC 19707 / BCRC 17464 / JCM 30415 / NCIMB 11848 / C-107).